A 306-amino-acid polypeptide reads, in one-letter code: Curved DNA-binding protein (306 aa).

A J domain is found at aspartate 5 to tryptophan 69.

The protein resides in the cytoplasm. The protein localises to the nucleoid. Functionally, DNA-binding protein that preferentially recognizes a curved DNA sequence. It is probably a functional analog of DnaJ; displays overlapping activities with DnaJ, but functions under different conditions, probably acting as a molecular chaperone in an adaptive response to environmental stresses other than heat shock. Lacks autonomous chaperone activity; binds native substrates and targets them for recognition by DnaK. Its activity is inhibited by the binding of CbpM. The sequence is that of Curved DNA-binding protein from Shigella sonnei (strain Ss046).